The following is a 188-amino-acid chain: PRA1 family protein 3 (188 aa).

The residue at position 1 (M1) is an N-acetylmethionine. Topologically, residues 1–35 (MDVNIAPLRAWDDFFPGSDRFARPDFRDISKWNNR) are cytoplasmic. Transmembrane regions (helical) follow at residues 36–56 (VVSN…MMIS) and 57–77 (VVGF…VLVF). Residues 78-93 (TGFVWAAHNKDILRRL) are Cytoplasmic-facing. The next 2 membrane-spanning stretches (helical) occupy residues 94–114 (KKQY…FLIS) and 115–135 (MFGG…LMFI). A required for homodimer formation and heterodimer formation with ARL6IP1 region spans residues 103-117 (MVVMLASYFLISMFG). At 136 to 188 (HASLRLRNLKNKLENKIEGIGLKRTPMGIVLDALEQQEENISKFADYISKVNE) the chain is on the cytoplasmic side. Residues 136 to 188 (HASLRLRNLKNKLENKIEGIGLKRTPMGIVLDALEQQEENISKFADYISKVNE) form a targeting to endoplasmic reticulum membrane region.

The protein belongs to the PRA1 family. In terms of assembly, homodimer. Heterodimer with ARL6IP1. Forms multimers. Interacts with ARL6. Interacts with prenylated RAB1A and RAB3A. Interacts with SLC1A1/EAAC1. Interacts with RTN2 (via first transmembrane domain). Does not interact with VAMP1, VAMP2 or VAMP3.

It localises to the endoplasmic reticulum membrane. It is found in the cell membrane. Its subcellular location is the cytoplasm. The protein localises to the cytoskeleton. Functionally, regulates intracellular concentrations of taurine and glutamate. Negatively modulates SLC1A1/EAAC1 glutamate transport activity by decreasing its affinity for glutamate in a PKC activity-dependent manner. Plays a role in the retention of SLC1A1/EAAC1 in the endoplasmic reticulum. This is PRA1 family protein 3 (ARL6IP5) from Sus scrofa (Pig).